Consider the following 108-residue polypeptide: Thiosulfate sulfurtransferase GlpE (108 aa).

Residues 17 to 105 (QEKEAVLVDI…WQRQFPAEVA (89 aa)) enclose the Rhodanese domain. Cys-65 functions as the Cysteine persulfide intermediate in the catalytic mechanism.

The protein belongs to the GlpE family.

The protein resides in the cytoplasm. It carries out the reaction thiosulfate + hydrogen cyanide = thiocyanate + sulfite + 2 H(+). The enzyme catalyses thiosulfate + [thioredoxin]-dithiol = [thioredoxin]-disulfide + hydrogen sulfide + sulfite + 2 H(+). Functionally, transferase that catalyzes the transfer of sulfur from thiosulfate to thiophilic acceptors such as cyanide or dithiols. May function in a CysM-independent thiosulfate assimilation pathway by catalyzing the conversion of thiosulfate to sulfite, which can then be used for L-cysteine biosynthesis. In Escherichia coli O157:H7, this protein is Thiosulfate sulfurtransferase GlpE.